We begin with the raw amino-acid sequence, 249 residues long: Putative TrmH family tRNA/rRNA methyltransferase (249 aa).

S-adenosyl-L-methionine is bound by residues glycine 196, isoleucine 216, and leucine 225.

The protein belongs to the class IV-like SAM-binding methyltransferase superfamily. RNA methyltransferase TrmH family.

The protein is Putative TrmH family tRNA/rRNA methyltransferase of Staphylococcus saprophyticus subsp. saprophyticus (strain ATCC 15305 / DSM 20229 / NCIMB 8711 / NCTC 7292 / S-41).